A 622-amino-acid chain; its full sequence is DNA mismatch repair protein MutL (622 aa).

Belongs to the DNA mismatch repair MutL/HexB family.

Its function is as follows. This protein is involved in the repair of mismatches in DNA. It is required for dam-dependent methyl-directed DNA mismatch repair. May act as a 'molecular matchmaker', a protein that promotes the formation of a stable complex between two or more DNA-binding proteins in an ATP-dependent manner without itself being part of a final effector complex. The protein is DNA mismatch repair protein MutL of Prosthecochloris aestuarii (strain DSM 271 / SK 413).